Reading from the N-terminus, the 351-residue chain is Ion-translocating oxidoreductase complex subunit D (351 aa).

The next 4 membrane-spanning stretches (helical) occupy residues 18–38 (IMLL…YFFG), 40–60 (GSLI…GAVL), 87–107 (LPPL…IVIA), and 121–141 (PAMV…TSWL). Residue threonine 185 is modified to FMN phosphoryl threonine. Helical transmembrane passes span 211-231 (VLAG…GLLL), 241-261 (IPVS…MIAP), 264-284 (FASP…FFIA), 298-318 (LIFG…GGYP), and 320-340 (GVAF…HYTQ).

This sequence belongs to the NqrB/RnfD family. In terms of assembly, the complex is composed of six subunits: RnfA, RnfB, RnfC, RnfD, RnfE and RnfG. It depends on FMN as a cofactor.

The protein localises to the cell inner membrane. Functionally, part of a membrane-bound complex that couples electron transfer with translocation of ions across the membrane. This Yersinia pseudotuberculosis serotype I (strain IP32953) protein is Ion-translocating oxidoreductase complex subunit D.